Here is a 630-residue protein sequence, read N- to C-terminus: Probable potassium transport system protein Kup 1 (630 aa).

12 helical membrane passes run 15–35 (FAALALAALGVVYGDIGTSPL), 59–79 (LSLIFWALVIVVSVKYVTFIM), 109–129 (WIMIVGVLGAAMFYGDGMVTP), 145–165 (PALKPFVIPLTMVVLFILFFV), 173–193 (VGAFFGPVMLVWFSALALLGV), 223–243 (LVAMGNVVLAVTGAEALYADM), 255–275 (WFAFVLPALVLNYFGQGALIL), 297–317 (LVGLATLATVIASQAVISGAF), 345–365 (IYLPAVNWGLMVAVMILVLGF), 374–394 (AYGIAVTGDMVITSILATVVV), 405–425 (AGLLFACFLSVELVFLAANIL), and 427–447 (IPDGGWFPLVAGMGVFVLMTT).

Belongs to the HAK/KUP transporter (TC 2.A.72) family.

It is found in the cell inner membrane. The catalysed reaction is K(+)(in) + H(+)(in) = K(+)(out) + H(+)(out). In terms of biological role, transport of potassium into the cell. Likely operates as a K(+):H(+) symporter. This chain is Probable potassium transport system protein Kup 1, found in Dechloromonas aromatica (strain RCB).